Consider the following 557-residue polypeptide: Jerky protein (557 aa).

The HTH psq-type domain maps to 11–62 (KGEKRKRVVLTLKEKIDICTRLERGESRKALMQEYNVGMSTLYDIKAHKAQL). 2 consecutive DNA-binding regions (H-T-H motif) follow at residues 38-58 (RKAL…IKAH) and 110-142 (PMLI…FKAR). In terms of domain architecture, HTH CENPB-type spans 77 to 149 (QRRTLHTPKL…KARHGIKKLD (73 aa)). The 170-residue stretch at 213–382 (KDRLTVLMCA…VPSQVFQRAW (170 aa)) folds into the DDE-1 domain.

This sequence belongs to the tigger transposable element derived protein family. As to expression, brain; highest in the temporal and brainstem regions.

It is found in the nucleus. Its function is as follows. May bind DNA. The sequence is that of Jerky protein from Mus musculus (Mouse).